Here is a 525-residue protein sequence, read N- to C-terminus: Matrix extracellular phosphoglycoprotein (525 aa).

The first 17 residues, 1 to 17 (MRVFCVGLLLFSVTWAA), serve as a signal peptide directing secretion. 3 disordered regions span residues 24–95 (TEKT…NRQR), 187–216 (AKAHSKDKKKPQRDSQAQKSPVKSKSTHRI), and 237–525 (EGSG…SDGD). Basic and acidic residues-rich tracts occupy residues 25–46 (EKTKQSCVEEQRQEEKNKDNIG) and 64–73 (IVQERKKDLS). 2 stretches are compositionally biased toward polar residues: residues 75-95 (SEASENKGSSKSQNYFTNRQR) and 200-210 (DSQAQKSPVKS). Residues 242–264 (TDLQERGDNDISPFSGDGQPFKD) form a dentonin region. The Cell attachment site signature appears at 247–249 (RGD). O-linked (Xyl...) (chondroitin sulfate) serine glycosylation occurs at S256. Composition is skewed to basic and acidic residues over residues 292 to 312 (ESTHLDTKKPGYNEIPEREEN) and 319 to 328 (TRDETAKEAD). N-linked (GlcNAc...) asparagine glycans are attached at residues N477 and N478. Positions 507–525 (RDDSSESSDSGSSSESDGD) are ASARM motif; interaction with PHEX. The span at 513 to 525 (SSDSGSSSESDGD) shows a compositional bias: low complexity.

This sequence belongs to the PF07175/osteoregulin family. As to quaternary structure, interacts (via the ASARM motif) with PHEX; the interaction is zinc-dependent. Phosphorylated on serine residues in the ASARM motif (in vitro) by FAM20C; the phosphorylation is important for the inhibition of bone mineralization. In terms of processing, cleaved by CTSB/cathepsin B; the cleavage is blocked by metalloprotease PHEX. Detected in urine (at protein level). Expressed by osteoblasts. Expressed by stem cells in dental pulp. Expressed by mesenchymal cells in dental papilla and dental pulp. Expressed in teeth, specifically in decidious dentin. Expressed in ondotoblasts. Expressed in salivary glands. Secreted from oncogenic hypophosphatemic tumors.

Its subcellular location is the secreted. The protein resides in the extracellular space. The protein localises to the extracellular matrix. Its function is as follows. Promotes renal phosphate excretion and inhibits intestinal phosphate absorption. Promotes bone mineralization by osteoblasts and cartilage mineralization by chondrocytes. Regulates the mineralization of the extracellular matrix of the craniofacial complex, such as teeth, bone and cartilage. Promotes dental pulp stem cell proliferation and differentiation. The sequence is that of Matrix extracellular phosphoglycoprotein (MEPE) from Homo sapiens (Human).